Reading from the N-terminus, the 101-residue chain is Putative fatty acid-binding protein 5-like protein 3 (101 aa).

This sequence belongs to the calycin superfamily. Fatty-acid binding protein (FABP) family.

In terms of biological role, high specificity for fatty acids. In Homo sapiens (Human), this protein is Putative fatty acid-binding protein 5-like protein 3 (FABP5P3).